The chain runs to 428 residues: Nuclear hormone receptor family member nhr-44 (428 aa).

A DNA-binding region (nuclear receptor) is located at residues 21-98 (SEKCLVCFQP…LGMKPDNIQR (78 aa)). 2 consecutive NR C4-type zinc fingers follow at residues 24–44 (CLVC…CRAC) and 61–86 (CREG…SDKC). The 247-residue stretch at 181–427 (SLEQLAFGLQ…LSHPEMFQFS (247 aa)) folds into the NR LBD domain.

It belongs to the nuclear hormone receptor family.

It is found in the nucleus. Its function is as follows. Orphan nuclear receptor. This chain is Nuclear hormone receptor family member nhr-44 (nhr-44), found in Caenorhabditis elegans.